A 126-amino-acid polypeptide reads, in one-letter code: Small ribosomal subunit protein uS13 (126 aa).

The tract at residues 95–126 (GLPVRGQRTRTNARTRKGPRKTVAGKKKAPRK) is disordered.

Belongs to the universal ribosomal protein uS13 family. In terms of assembly, part of the 30S ribosomal subunit. Forms a loose heterodimer with protein S19. Forms two bridges to the 50S subunit in the 70S ribosome.

Functionally, located at the top of the head of the 30S subunit, it contacts several helices of the 16S rRNA. In the 70S ribosome it contacts the 23S rRNA (bridge B1a) and protein L5 of the 50S subunit (bridge B1b), connecting the 2 subunits; these bridges are implicated in subunit movement. Contacts the tRNAs in the A and P-sites. In Thermus thermophilus (strain ATCC BAA-163 / DSM 7039 / HB27), this protein is Small ribosomal subunit protein uS13 (rpsM).